Consider the following 398-residue polypeptide: Succinate--CoA ligase [ADP-forming] subunit beta (398 aa).

One can recognise an ATP-grasp domain in the interval 9–253 (KEILASYGVR…IREENPIEVE (245 aa)). ATP-binding positions include lysine 50, 57–59 (GRG), valine 106, and glutamate 116. Mg(2+) is bound by residues asparagine 208 and aspartate 222. Residues asparagine 273 and 330–332 (GIV) each bind substrate.

The protein belongs to the succinate/malate CoA ligase beta subunit family. In terms of assembly, heterotetramer of two alpha and two beta subunits. It depends on Mg(2+) as a cofactor.

It catalyses the reaction succinate + ATP + CoA = succinyl-CoA + ADP + phosphate. The catalysed reaction is GTP + succinate + CoA = succinyl-CoA + GDP + phosphate. Its pathway is carbohydrate metabolism; tricarboxylic acid cycle; succinate from succinyl-CoA (ligase route): step 1/1. Succinyl-CoA synthetase functions in the citric acid cycle (TCA), coupling the hydrolysis of succinyl-CoA to the synthesis of either ATP or GTP and thus represents the only step of substrate-level phosphorylation in the TCA. The beta subunit provides nucleotide specificity of the enzyme and binds the substrate succinate, while the binding sites for coenzyme A and phosphate are found in the alpha subunit. The chain is Succinate--CoA ligase [ADP-forming] subunit beta from Flavobacterium psychrophilum (strain ATCC 49511 / DSM 21280 / CIP 103535 / JIP02/86).